A 149-amino-acid polypeptide reads, in one-letter code: 3-dehydroquinate dehydratase (149 aa).

Tyr-26 acts as the Proton acceptor in catalysis. Positions 78, 84, and 91 each coordinate substrate. His-104 (proton donor) is an active-site residue. Substrate is bound by residues 105-106 and Arg-115; that span reads IS.

Belongs to the type-II 3-dehydroquinase family. Homododecamer.

It carries out the reaction 3-dehydroquinate = 3-dehydroshikimate + H2O. Its pathway is metabolic intermediate biosynthesis; chorismate biosynthesis; chorismate from D-erythrose 4-phosphate and phosphoenolpyruvate: step 3/7. Catalyzes a trans-dehydration via an enolate intermediate. The sequence is that of 3-dehydroquinate dehydratase (aroQ) from Buchnera aphidicola subsp. Schizaphis graminum (strain Sg).